A 91-amino-acid polypeptide reads, in one-letter code: Small ribosomal subunit protein uS19 (91 aa).

This sequence belongs to the universal ribosomal protein uS19 family.

Its function is as follows. Protein S19 forms a complex with S13 that binds strongly to the 16S ribosomal RNA. The chain is Small ribosomal subunit protein uS19 from Methylobacillus flagellatus (strain ATCC 51484 / DSM 6875 / VKM B-1610 / KT).